The chain runs to 1199 residues: AP-3 complex subunit delta-1 (1199 aa).

Position 2 is an N-acetylalanine (Ala-2). 9 HEAT repeats span residues 34–71 (KYISQCIDEIKQELKQDNIAVKANAVCKLTYLQMLGYD), 142–179 (DLARDLANDIMTLMSHTKPYIRKKAVLIMYKVFLKYPE), 180–216 (SLRPAFPRLKEKLEDPDPGVQSAAVNVICELARRNPK), 218–254 (YLSLAPLFFKLMTSSTNNWVLIKIIKLFGALTPLEPR), 257–296 (KKLIEPLTNLIHSTSAMSLLYECVNTVIAVLISLSSGMPN), 298–336 (SASIQLCVQKLRILIEDSDQNLKYLGLLAMSKILKTHPK), 337–373 (SVQSHKDLILQCLDDKDESIRLRALDLLYGMVSKKNL), 375–409 (EIVKKLMTHVDKAEGTTYRDELLTKIIDICSQSNY), and 521–558 (VYVQNVVKLYASILQQKEQAADTEAAQEVTQLLVERLP). Disordered regions lie at residues 623–695 (LDAW…RYQD) and 724–963 (YVKL…EPIP). Ser-632, Ser-634, and Ser-636 each carry phosphoserine. Composition is skewed to basic and acidic residues over residues 639-651 (EKPKAIFHEEEPR) and 665-675 (LARRREARKQE). The stretch at 659-679 (EEDEEELARRREARKQEQANN) forms a coiled coil. Ser-688 carries the post-translational modification Phosphoserine. A coiled-coil region spans residues 722–750 (DQYVKLEEQRRHRQRLEKDKKRKKKEKGK). Residues 732–754 (RHRQRLEKDKKRKKKEKGKRRHS) are compositionally biased toward basic residues. A phosphoserine mark is found at Ser-754 and Ser-755. The residue at position 758 (Thr-758) is a Phosphothreonine. Phosphoserine occurs at positions 760, 784, and 825. Residues 773 to 790 (ITEEMPENALPSDEDDKD) are compositionally biased toward acidic residues. Residues 791 to 836 (PNDPYRALDIDLDKPLADSEKLPVQKHRNAEAVKSPEKEGVLGVEK) are compositionally biased toward basic and acidic residues. Residues 837-846 (KSKKPKKKEK) show a composition bias toward basic residues. The stretch at 843 to 863 (KKEKKTKEREREKKDKKGEDL) forms a coiled coil. A compositionally biased stretch (basic and acidic residues) spans 847–862 (KTKEREREKKDKKGED). A compositionally biased stretch (pro residues) spans 870–880 (TPPPAAAPIPA). Residues 894–916 (PKDECEVLKGEEEDHVDHDQERK) show a composition bias toward basic and acidic residues. Positions 911-934 (HDQERKSSRHKKKKHRKEKEKEER) form a coiled coil. Over residues 917-928 (SSRHKKKKHRKE) the composition is skewed to basic residues.

It belongs to the adaptor complexes large subunit family. Adaptor protein complex 3 (AP-3) is a heterotetramer composed of two large adaptins (delta-type subunit AP3D1 and beta-type subunit AP3B1 or AP3B2), a medium adaptin (mu-type subunit AP3M1 or AP3M2) and a small adaptin (sigma-type subunit APS1 or AP3S2). AP-3 associates with the BLOC-1 complex. Interacts with SLC30A2. Interacts with CLN3 (via dileucine motif); this interaction facilitates lysosomal targeting.

It localises to the cytoplasm. The protein resides in the golgi apparatus membrane. In terms of biological role, part of the AP-3 complex, an adaptor-related complex which is not clathrin-associated. The complex is associated with the Golgi region as well as more peripheral structures. It facilitates the budding of vesicles from the Golgi membrane and may be directly involved in trafficking to lysosomes. Involved in process of CD8+ T-cell and NK cell degranulation. In concert with the BLOC-1 complex, AP-3 is required to target cargos into vesicles assembled at cell bodies for delivery into neurites and nerve terminals. The chain is AP-3 complex subunit delta-1 (Ap3d1) from Mus musculus (Mouse).